A 240-amino-acid polypeptide reads, in one-letter code: Ribonuclease PH (240 aa).

Phosphate contacts are provided by residues arginine 87 and 125–127; that span reads GTR.

The protein belongs to the RNase PH family. In terms of assembly, homohexameric ring arranged as a trimer of dimers.

The enzyme catalyses tRNA(n+1) + phosphate = tRNA(n) + a ribonucleoside 5'-diphosphate. Phosphorolytic 3'-5' exoribonuclease that plays an important role in tRNA 3'-end maturation. Removes nucleotide residues following the 3'-CCA terminus of tRNAs; can also add nucleotides to the ends of RNA molecules by using nucleoside diphosphates as substrates, but this may not be physiologically important. Probably plays a role in initiation of 16S rRNA degradation (leading to ribosome degradation) during starvation. This Pseudomonas fluorescens (strain ATCC BAA-477 / NRRL B-23932 / Pf-5) protein is Ribonuclease PH.